We begin with the raw amino-acid sequence, 231 residues long: uncharacterized protein (231 aa).

A run of 7 helical transmembrane segments spans residues 26–46, 56–76, 84–104, 112–132, 142–162, 163–183, and 206–226; these read TYSW…LTAQ, SLRL…SMFA, AGAL…ALLF, ITAF…GFVI, FFLF…FVGS, SALS…LTAY, and INGA…LLNI.

This sequence belongs to the BI1 family.

The protein resides in the cell membrane. This is an uncharacterized protein from Deinococcus radiodurans (strain ATCC 13939 / DSM 20539 / JCM 16871 / CCUG 27074 / LMG 4051 / NBRC 15346 / NCIMB 9279 / VKM B-1422 / R1).